The chain runs to 260 residues: Carbonic anhydrase 3 (260 aa).

An N-acetylalanine modification is found at Ala-2. One can recognise an Alpha-carbonic anhydrase domain in the interval 3–259; that stretch reads KEWGYADHNG…IKGRIVKASF (257 aa). Ser-29, Ser-43, Ser-50, and Ser-55 each carry phosphoserine. Residues 64–67 are involved in proton transfer; the sequence is KTCR. Thr-73 bears the Phosphothreonine mark. The Zn(2+) site is built by His-94, His-96, and His-119. At Tyr-127 the chain carries Phosphotyrosine. Cys-182 and Cys-187 each carry S-glutathionyl cysteine. 198–199 lines the substrate pocket; that stretch reads TT. Thr-216 is subject to Phosphothreonine. A Phosphoserine modification is found at Ser-219.

Belongs to the alpha-carbonic anhydrase family. Zn(2+) is required as a cofactor. In terms of processing, S-thiolated both by thiol-disulfide exchange with glutathione disulfide and by oxyradical-initiated S-thiolation with reduced glutathione. Post-translationally, S-glutathionylated in hepatocytes under oxidative stress.

It localises to the cytoplasm. It catalyses the reaction hydrogencarbonate + H(+) = CO2 + H2O. With respect to regulation, inhibited by acetazolamide. Functionally, reversible hydration of carbon dioxide. This is Carbonic anhydrase 3 (CA3) from Bos taurus (Bovine).